The chain runs to 312 residues: Olfactory receptor 52A1 (312 aa).

Over 1–27 the chain is Extracellular; it reads MSISNITVYMPSVLTLVGIPGLESVQC. Asparagine 5 is a glycosylation site (N-linked (GlcNAc...) asparagine). The helical transmembrane segment at 28–48 threads the bilayer; sequence WIGIPFCAIYLIAMIGNSLLL. Over 49-56 the chain is Cytoplasmic; it reads SIIKSERS. The chain crosses the membrane as a helical span at residues 57-77; the sequence is LHEPLYIFLGMLGATDIALAS. The Extracellular portion of the chain corresponds to 78–101; that stretch reads SIMPKMLGIFWFNVPEIYFDSCLL. The cysteines at positions 99 and 182 are disulfide-linked. Residues 102–122 form a helical membrane-spanning segment; that stretch reads QMWFIHTLQGIESGILVAMAL. Over 123–141 the chain is Cytoplasmic; the sequence is DRYVAICYPLRHANIFTHQ. Residues 142 to 162 form a helical membrane-spanning segment; sequence LVIQIGTMVVLRAAILVAPCL. Residues 163 to 199 are Extracellular-facing; the sequence is VLIKCRFQFYHTTVISHSYCEHMAIVKLAAANVQVNK. The helical transmembrane segment at 200–220 threads the bilayer; it reads IYGLFVAFTVAGFDLTFITLS. The Cytoplasmic segment spans residues 221 to 240; that stretch reads YIQIFITVFRLPQKEARFKA. The helical transmembrane segment at 241–261 threads the bilayer; sequence FNTCIAHICVFLQFYLLAFFS. Residues 262-276 are Extracellular-facing; that stretch reads FFTHRFGSHISPYIH. A helical transmembrane segment spans residues 277-297; sequence ILFSSIYLLVPPFLNPLVYGA. Over 298–312 the chain is Cytoplasmic; the sequence is KTTQIRIHVVKMFCS.

Belongs to the G-protein coupled receptor 1 family.

Its subcellular location is the cell membrane. Functionally, odorant receptor. This is Olfactory receptor 52A1 (OR52A1) from Homo sapiens (Human).